A 130-amino-acid polypeptide reads, in one-letter code: Fumarate reductase subunit C (130 aa).

Helical transmembrane passes span 30–50 (EGTS…VFSL), 60–80 (FVSF…LFAA), and 110–130 (IKAL…VALL).

Belongs to the FrdC family. Part of an enzyme complex containing four subunits: a flavoprotein (FrdA), an iron-sulfur protein (FrdB), and two hydrophobic anchor proteins (FrdC and FrdD).

The protein resides in the cell inner membrane. Two distinct, membrane-bound, FAD-containing enzymes are responsible for the catalysis of fumarate and succinate interconversion; fumarate reductase is used in anaerobic growth, and succinate dehydrogenase is used in aerobic growth. Anchors the catalytic components of the fumarate reductase complex to the cell inner membrane, binds quinones. The chain is Fumarate reductase subunit C from Yersinia pestis bv. Antiqua (strain Angola).